The sequence spans 199 residues: GTP cyclohydrolase-2 (199 aa).

A GTP-binding site is contributed by 50–54; it reads RIHSE. Cys55, Cys66, and Cys68 together coordinate Zn(2+). Residues Gln71, 93–95, and Thr115 each bind GTP; that span reads EGR. The active-site Proton acceptor is the Asp127. Arg129 acts as the Nucleophile in catalysis. GTP-binding residues include Thr150 and Lys155.

This sequence belongs to the GTP cyclohydrolase II family. Homodimer. Zn(2+) serves as cofactor.

It catalyses the reaction GTP + 4 H2O = 2,5-diamino-6-hydroxy-4-(5-phosphoribosylamino)-pyrimidine + formate + 2 phosphate + 3 H(+). It participates in cofactor biosynthesis; riboflavin biosynthesis; 5-amino-6-(D-ribitylamino)uracil from GTP: step 1/4. Functionally, catalyzes the conversion of GTP to 2,5-diamino-6-ribosylamino-4(3H)-pyrimidinone 5'-phosphate (DARP), formate and pyrophosphate. This Buchnera aphidicola subsp. Baizongia pistaciae (strain Bp) protein is GTP cyclohydrolase-2.